Reading from the N-terminus, the 364-residue chain is Guanine nucleotide-binding protein alpha-8 subunit (364 aa).

The N-myristoyl glycine moiety is linked to residue glycine 2. Cysteine 5 carries S-palmitoyl cysteine lipidation. The 327-residue stretch at 38 to 364 (KILKLLILGP…QHTMQKVGIQ (327 aa)) folds into the G-alpha domain. The tract at residues 41–54 (KLLILGPGESGKST) is G1 motif. Residues 46–53 (GPGESGKS), 186–192 (LKSRVPT), 211–215 (DVGGQ), 280–283 (NKID), and alanine 336 each bind GTP. Positions 53 and 192 each coordinate Mg(2+). The G2 motif stretch occupies residues 184-192 (DILKSRVPT). A G3 motif region spans residues 207–216 (FKIFDVGGQR). The G4 motif stretch occupies residues 276 to 283 (ILFLNKID). The segment at 334 to 339 (TCATDT) is G5 motif.

Belongs to the G-alpha family. G proteins are composed of 3 units; alpha, beta and gamma. The alpha chain contains the guanine nucleotide binding site.

Functionally, guanine nucleotide-binding proteins (G proteins) are involved as modulators or transducers in various transmembrane signaling systems. The protein is Guanine nucleotide-binding protein alpha-8 subunit (gpa-8) of Caenorhabditis briggsae.